A 539-amino-acid polypeptide reads, in one-letter code: T-complex protein 1 subunit delta (539 aa).

Residues 1–28 (MPENVASRSGPPAAGPGNRGKGAYQDRD) form a disordered region. Arg19 bears the Omega-N-methylarginine mark. At Lys21 the chain carries N6-acetyllysine. Residue Ser36 is modified to Phosphoserine. Position 53 (Gly53) interacts with ADP. Gly53 is a binding site for ATP. Asp104 provides a ligand contact to Mg(2+). ADP contacts are provided by Gly105, Thr106, Thr107, Ser108, Asn172, Ser173, and Lys174. 2 residues coordinate ATP: Gly105 and Thr106. Lys174 serves as a coordination point for ATP. Phosphoserine occurs at positions 184 and 202. N6-acetyllysine occurs at positions 288, 302, 319, and 326. ADP is bound at residue Gly425. Phosphoserine is present on Ser444. Gln510 contacts ADP.

It belongs to the TCP-1 chaperonin family. In terms of assembly, component of the chaperonin-containing T-complex (TRiC), a hexadecamer composed of two identical back-to-back stacked rings enclosing a protein folding chamber. Each ring is made up of eight different subunits: TCP1/CCT1, CCT2, CCT3, CCT4, CCT5, CCT6A/CCT6, CCT7, CCT8. Interacts with PACRG. Interacts with DNAAF4. Interacts with DLEC1.

It is found in the cytoplasm. The protein localises to the melanosome. The protein resides in the cytoskeleton. It localises to the microtubule organizing center. Its subcellular location is the centrosome. It is found in the cilium basal body. The enzyme catalyses ATP + H2O = ADP + phosphate + H(+). Its function is as follows. Component of the chaperonin-containing T-complex (TRiC), a molecular chaperone complex that assists the folding of actin, tubulin and other proteins upon ATP hydrolysis. The TRiC complex mediates the folding of WRAP53/TCAB1, thereby regulating telomere maintenance. As part of the TRiC complex may play a role in the assembly of BBSome, a complex involved in ciliogenesis regulating transports vesicles to the cilia. The protein is T-complex protein 1 subunit delta (Cct4) of Rattus norvegicus (Rat).